Consider the following 404-residue polypeptide: Caspase-1 (404 aa).

In terms of domain architecture, CARD spans 1 to 91; it reads MADKVLKDKR…HLAQTLGLSS (91 aa). Residues 1–119 constitute a propeptide that is removed on maturation; the sequence is MADKVLKDKR…SLPAFVENMP (119 aa). Catalysis depends on residues His237 and Cys285. Positions 298 to 316 are excised as a propeptide; that stretch reads SPKASTDSWTHQPLMLQSD. Ser302 is modified (phosphoserine).

This sequence belongs to the peptidase C14A family. As to quaternary structure, heterotetramer that consists of two anti-parallel arranged heterodimers, each one formed by a 20 kDa (Caspase-1 subunit p20) and a 10 kDa (Caspase-1 subunit p10) subunit. May be a component of the inflammasome, a protein complex which also includes PYCARD, CARD8 and NLRP2 and whose function would be the activation of pro-inflammatory caspases. Component of the AIM2 PANoptosome complex, a multiprotein complex that drives inflammatory cell death (PANoptosis). Both the p10 and p20 subunits interact with MEFV. Interacts with CARD17P/INCA and CARD18. Interacts with SERPINB1; this interaction regulates CASP1 activity. Heterotetramer that consists of two anti-parallel arranged heterodimers, each one formed by a 20 kDa (Caspase-1 subunit p20) and a 10 kDa (Caspase-1 subunit p10) subunit. In terms of processing, the two subunits are derived from the precursor sequence by an autocatalytic mechanism. Post-translationally, ubiquitinated via 'Lys-11'-linked polyubiquitination. Deubiquitinated by USP8.

It is found in the cytoplasm. The protein localises to the cell membrane. The catalysed reaction is Strict requirement for an Asp residue at position P1 and has a preferred cleavage sequence of Tyr-Val-Ala-Asp-|-.. In terms of biological role, thiol protease involved in a variety of inflammatory processes by proteolytically cleaving other proteins, such as the precursors of the inflammatory cytokines interleukin-1 beta (IL1B) and interleukin 18 (IL18) as well as the pyroptosis inducer Gasdermin-D (GSDMD), into active mature peptides. Plays a key role in cell immunity as an inflammatory response initiator: once activated through formation of an inflammasome complex, it initiates a pro-inflammatory response through the cleavage of the two inflammatory cytokines IL1B and IL18, releasing the mature cytokines which are involved in a variety of inflammatory processes. Cleaves a tetrapeptide after an Asp residue at position P1. Also initiates pyroptosis, a programmed lytic cell death pathway, through cleavage of GSDMD. In contrast to cleavage of interleukin IL1B, recognition and cleavage of GSDMD is not strictly dependent on the consensus cleavage site but depends on an exosite interface on CASP1 that recognizes and binds the Gasdermin-D, C-terminal (GSDMD-CT) part. Cleaves and activates CASP7 in response to bacterial infection, promoting plasma membrane repair. Upon inflammasome activation, during DNA virus infection but not RNA virus challenge, controls antiviral immunity through the cleavage of CGAS, rendering it inactive. In apoptotic cells, cleaves SPHK2 which is released from cells and remains enzymatically active extracellularly. In Canis lupus familiaris (Dog), this protein is Caspase-1 (CASP1).